We begin with the raw amino-acid sequence, 376 residues long: Glutamate 5-kinase (376 aa).

ATP is bound at residue K17. Substrate-binding residues include S56, D144, and N156. ATP-binding positions include T176–D177 and T218–K224. In terms of domain architecture, PUA spans K283 to K359.

It belongs to the glutamate 5-kinase family.

It is found in the cytoplasm. It carries out the reaction L-glutamate + ATP = L-glutamyl 5-phosphate + ADP. It participates in amino-acid biosynthesis; L-proline biosynthesis; L-glutamate 5-semialdehyde from L-glutamate: step 1/2. In terms of biological role, catalyzes the transfer of a phosphate group to glutamate to form L-glutamate 5-phosphate. This Desulfotalea psychrophila (strain LSv54 / DSM 12343) protein is Glutamate 5-kinase.